Here is a 106-residue protein sequence, read N- to C-terminus: Urease subunit beta (106 aa).

This sequence belongs to the urease beta subunit family. Heterotrimer of UreA (gamma), UreB (beta) and UreC (alpha) subunits. Three heterotrimers associate to form the active enzyme.

Its subcellular location is the cytoplasm. It catalyses the reaction urea + 2 H2O + H(+) = hydrogencarbonate + 2 NH4(+). Its pathway is nitrogen metabolism; urea degradation; CO(2) and NH(3) from urea (urease route): step 1/1. This is Urease subunit beta from Prochlorococcus marinus (strain MIT 9215).